A 78-amino-acid chain; its full sequence is Acyl carrier protein (78 aa).

One can recognise a Carrier domain in the interval 2-77 (SSIEERVKKI…LAINYINENL (76 aa)). O-(pantetheine 4'-phosphoryl)serine is present on Ser37.

Belongs to the acyl carrier protein (ACP) family. 4'-phosphopantetheine is transferred from CoA to a specific serine of apo-ACP by AcpS. This modification is essential for activity because fatty acids are bound in thioester linkage to the sulfhydryl of the prosthetic group.

The protein localises to the cytoplasm. Its pathway is lipid metabolism; fatty acid biosynthesis. Functionally, carrier of the growing fatty acid chain in fatty acid biosynthesis. In Saccharophagus degradans (strain 2-40 / ATCC 43961 / DSM 17024), this protein is Acyl carrier protein.